A 93-amino-acid polypeptide reads, in one-letter code: Large ribosomal subunit protein uL23cz/uL23cy (93 aa).

It belongs to the universal ribosomal protein uL23 family. As to quaternary structure, part of the 50S ribosomal subunit.

The protein localises to the plastid. It is found in the chloroplast. Binds to 23S rRNA. The chain is Large ribosomal subunit protein uL23cz/uL23cy (rpl23-A) from Lactuca sativa (Garden lettuce).